The following is a 314-amino-acid chain: Taste receptor type 2 member 42 (314 aa).

The Extracellular segment spans residues 1–7 (MATELDK). Residues 8 to 28 (IFLILEIAEFIIGMLGNVFIG) traverse the membrane as a helical segment. At 29-50 (LVNCSEGIKNQKVFSADFILTC) the chain is on the cytoplasmic side. Residues 51–71 (LAISTIGQLFVILFDSFLVGL) traverse the membrane as a helical segment. The Extracellular segment spans residues 72–101 (ASHLYTTYRLGKPVIMLWHMTNHLTTWLAT). A helical transmembrane segment spans residues 102-122 (CLSIFYFFKIAHFPHSLFLWL). Residues 123–127 (RWRMN) are Cytoplasmic-facing. A helical membrane pass occupies residues 128 to 148 (GMIVMLLILSLFLLIFNSLVL). Over 149–187 (EIFIDISLNIIDKSNLTLYLDESKTVYDKLSILKTLLSL) the chain is Extracellular. N-linked (GlcNAc...) asparagine glycosylation is present at N163. Residues 188–208 (TSFIPFSLSLTSLLFLFLSLV) traverse the membrane as a helical segment. Topologically, residues 209–238 (RHTRNLKLSSLGSRDSSTEAHRRAMKMVMS) are cytoplasmic. The chain crosses the membrane as a helical span at residues 239–259 (FLFLFIVHFFSLQVANWIFFM). The Extracellular segment spans residues 260–265 (LWNNKY). A helical membrane pass occupies residues 266 to 286 (IKFAMLALNAFPSCHSFILIL). Over 287 to 314 (GNSKLRQTAVRLLWHLRNYTKTPNPLPL) the chain is Cytoplasmic.

Belongs to the G-protein coupled receptor T2R family.

It localises to the membrane. Receptor that may play a role in the perception of bitterness and is gustducin-linked. May play a role in sensing the chemical composition of the gastrointestinal content. The activity of this receptor may stimulate alpha gustducin, mediate PLC-beta-2 activation and lead to the gating of TRPM5. The protein is Taste receptor type 2 member 42 (TAS2R42) of Pan troglodytes (Chimpanzee).